The sequence spans 3587 residues: Tyrocidine synthase 2 (3587 aa).

The tract at residues 466–1045 (AATMHELFSR…IQALAAYVEG (580 aa)) is domain 1 (Proline-activating). 2 Carrier domains span residues 972-1047 (APTT…EGGE) and 2007-2082 (APAT…EHSE). An O-(pantetheine 4'-phosphoryl)serine mark is found at Ser1007 and Ser2042. Residues 1522–2081 (EQTAVVFGDK…RDLARLIEHS (560 aa)) are domain 2 (Phenylalanine-activating). The segment at 2540–3122 (YRADQTIQQL…NSRESEQGVV (583 aa)) is domain 3 (D-phenylalanine-activating). Residues 3017-3040 (NDKIDRKALPKPNQEENRTEQYAA) form a disordered region. Positions 3018–3035 (DKIDRKALPKPNQEENRT) are enriched in basic and acidic residues. Positions 3040–3114 (APQTELEQLL…EAALRVIPNS (75 aa)) constitute a Carrier 3 domain. Ser3075 carries the post-translational modification O-(pantetheine 4'-phosphoryl)serine.

The protein belongs to the ATP-dependent AMP-binding enzyme family. Large multienzyme complex of TycA, TycB and TycC. Pantetheine 4'-phosphate is required as a cofactor.

The enzyme catalyses L-phenylalanine + ATP + H2O = D-phenylalanine + AMP + diphosphate + H(+). It functions in the pathway antibiotic biosynthesis; tyrocidine biosynthesis. Its function is as follows. Activates the second to fourth amino acids in tyrocidine (in tyrocidine A, Pro, Phe, and D-Phe) and epimerizes the last one. This Brevibacillus parabrevis protein is Tyrocidine synthase 2 (tycB).